Reading from the N-terminus, the 509-residue chain is MEDFKVKLVELVSITGGLIVLFIAYTGFRTVYNASFNRLRHIPGPWINSVSMIPYARHMLAGTTVENSVRLHEKYGDVVRISPNEVSFISGETAFPDIYGFRTGKLKGHLNMEKDPVWYVKPSNGSPSLLQANDEDHARGRRVLSHAFSERAVAAQEPLVQTYVDQLINGLKGATAEKEGEGVVDMVSWYNWTTFDIIADLMFGEPFGCLQDLSTHKYVAVLLESFKSLRILYVLAHFPWLKYFGNLFLDQRQVQKRKDHLSWVSTQVQKRRDRETTRPDFMTLILANNGNKGSKLTDEEINSNAFLLLNAGSETTATLLSAVTFLLLKNPRVMEKLKQEIREKFASYEEIQLPTLNTMTYLHAVLLEALRYFPPAPVGFGRVVNRGGEFISGHFLPEGCIVSVSQYAAYHSSRNFKDPDAFVPERWHVPREKEYADDKRSAAQPFSYGPRGCLGRNLAHAELRIILAKMVWSFDLELEERSQDWLSRCKVMRLWVKPELAVKLKKVIR.

A helical membrane pass occupies residues 8 to 28 (LVELVSITGGLIVLFIAYTGF). Cys-453 contacts heme.

It belongs to the cytochrome P450 family. Heme is required as a cofactor.

It localises to the membrane. It functions in the pathway secondary metabolite biosynthesis. In terms of biological role, cytochrome P450 monooxygenase; part of the tra gene cluster that produces terrestric acid. The clavatol biosynthesis cluster cla and the terrestric acid cluster tra are both involved in the production of peniphenones and penilactones. The non-reducing PKS claF is responsible for the formation of clavatol from successive condensations of 3 malonyl-CoA units, presumably with a simple acetyl-CoA starter unit, and 2 methylation steps. The esterase claE probably collaborates with claF by catalyzing the hydrolysis of ACP-bound acyl intermediates to free the ACP from stalled intermediates. The clavatol oxidase claD then converts clavatol to hydroxyclavatol. Spontaneous dehydration of hydroxyclavatol leads to the accumulation of the highly active ortho-quinone methide. On the other hand, the PKS-NRPS hybrid traA is involved in the formation of crustosic acid, with the help of traB and traD. The polyketide synthase module (PKS) of traA is responsible for the synthesis of the polyketide backbone via the condensation of an acetyl-CoA starter unit with 3 malonyl-CoA units. The downstream nonribosomal peptide synthetase (NRPS) module then amidates the carboxyl end of the polyketide with L-malic acid. Because traA lacks a designated enoylreductase (ER) domain, the required activity is provided the enoyl reductase traG. Crustosic acid undergoes decarboxylation and isomerization to the terrestric acid, catalyzed by the 2-oxoglutarate-dependent dioxygenase traH. Both acids are further converted to the 2 gamma-butyrolactones (R)-5-methyltetronic acid and (S)-5-carboxylmethyltetronic acid, with involvement of the cytochrome P450 monooxygenase claJ. Spontaneous addition of the methide to these gamma-butyrolactones leads to peniphenone D and penilactone D, which undergo again stereospecific attacking by methide to give penilactones A and B. The protein is Cytochrome P450 monooxygenase traB of Penicillium crustosum (Blue mold fungus).